A 753-amino-acid chain; its full sequence is 5-methyltetrahydropteroyltriglutamate--homocysteine methyltransferase (753 aa).

5-methyltetrahydropteroyltri-L-glutamate is bound by residues 17-20 (RELK) and K117. L-homocysteine is bound by residues 431 to 433 (IGS) and E484. L-methionine contacts are provided by residues 431 to 433 (IGS) and E484. Residues 515 to 516 (RC) and W561 contribute to the 5-methyltetrahydropteroyltri-L-glutamate site. D599 is an L-homocysteine binding site. D599 provides a ligand contact to L-methionine. E605 is a binding site for 5-methyltetrahydropteroyltri-L-glutamate. Residues H641, C643, and E665 each contribute to the Zn(2+) site. Residue H694 is the Proton donor of the active site. C726 contributes to the Zn(2+) binding site.

Belongs to the vitamin-B12 independent methionine synthase family. The cofactor is Zn(2+).

The catalysed reaction is 5-methyltetrahydropteroyltri-L-glutamate + L-homocysteine = tetrahydropteroyltri-L-glutamate + L-methionine. Its pathway is amino-acid biosynthesis; L-methionine biosynthesis via de novo pathway; L-methionine from L-homocysteine (MetE route): step 1/1. Its function is as follows. Catalyzes the transfer of a methyl group from 5-methyltetrahydrofolate to homocysteine resulting in methionine formation. This chain is 5-methyltetrahydropteroyltriglutamate--homocysteine methyltransferase, found in Shigella dysenteriae serotype 1 (strain Sd197).